Here is a 944-residue protein sequence, read N- to C-terminus: Leucine--tRNA ligase (944 aa).

A 'HIGH' region motif is present at residues 40-51 (PYPSGAGLHVGH). A 'KMSKS' region motif is present at residues 718 to 722 (KMSKS). Lys721 is a binding site for ATP.

It belongs to the class-I aminoacyl-tRNA synthetase family.

It is found in the cytoplasm. The catalysed reaction is tRNA(Leu) + L-leucine + ATP = L-leucyl-tRNA(Leu) + AMP + diphosphate. The sequence is that of Leucine--tRNA ligase from Phocaeicola vulgatus (strain ATCC 8482 / DSM 1447 / JCM 5826 / CCUG 4940 / NBRC 14291 / NCTC 11154) (Bacteroides vulgatus).